Reading from the N-terminus, the 448-residue chain is Velvet complex subunit 2 (448 aa).

Disordered regions lie at residues 1 to 153 (MNSA…SKIE) and 224 to 306 (EPGT…NGYG). The span at 15-34 (PGPAYSSSAPPPIHTYQQHQ) shows a compositional bias: low complexity. 2 stretches are compositionally biased toward pro residues: residues 35 to 44 (HPPPPLPPPS) and 52 to 61 (PPLPPPPSAP). The span at 96–107 (APYQQSQPSQYP) shows a compositional bias: low complexity. The segment covering 116–132 (VPPPSQHDEPPPPPSSG) has biased composition (pro residues). The 277-residue stretch at 155 to 431 (GSGWKYSLDV…ANQGIKIPIR (277 aa)) folds into the Velvet domain. Low complexity predominate over residues 260 to 292 (QQSYGPAPSYPPSSSYGPPQQYYPRHSGYSAEP).

This sequence belongs to the velvet family. VelB subfamily. As to quaternary structure, component of the heterotrimeric velvet complex composed of LAE1, VE1 and VELB; VE1 acting as a bridging protein between LAE1 and VEL2. Interacts with VE1. Forms a heterodimeric complex with VOS1; the formation of the VELB-VOS1 complex is light-dependent.

The protein localises to the nucleus. It is found in the cytoplasm. In terms of biological role, component of the velvet transcription factor complex that controls sexual/asexual developmental ratio in response to light, promoting sexual development in the darkness while stimulating asexual sporulation under illumination. The velvet complex acts as a global regulator for secondary metabolite gene expression. Component of the VELB-VOS1 heterodimeric complex that plays a dual role in activating genes associated with spore maturation and repressing certain development-associated genes. The VELB-VOS1 complex binds DNA through the DNA-binding domain of VOS1 that recognizes an 11-nucleotide consensus sequence 5'-CTGGCCGCGGC-3' consisting of two motifs in the promoters of key developmental regulatory genes. Controls the expression of the fumonisins gene cluster. Involved in cell wall integrity, cell surface hydrophobicity, hyphal polarity and conidiation pattern. Involved in oxidative stress resistance by positively regulating the transcription of the catalase-encoding gene CAT2. The sequence is that of Velvet complex subunit 2 from Gibberella moniliformis (strain M3125 / FGSC 7600) (Maize ear and stalk rot fungus).